The following is a 229-amino-acid chain: Large ribosomal subunit protein uL1 (229 aa).

This sequence belongs to the universal ribosomal protein uL1 family. Part of the 50S ribosomal subunit.

Its function is as follows. Binds directly to 23S rRNA. The L1 stalk is quite mobile in the ribosome, and is involved in E site tRNA release. Protein L1 is also a translational repressor protein, it controls the translation of the L11 operon by binding to its mRNA. The polypeptide is Large ribosomal subunit protein uL1 (Streptococcus pneumoniae serotype 2 (strain D39 / NCTC 7466)).